Consider the following 387-residue polypeptide: S-adenosylmethionine synthase (387 aa).

H17 contributes to the ATP binding site. Residue D19 participates in Mg(2+) binding. E45 lines the K(+) pocket. The L-methionine site is built by E58 and Q101. The tract at residues Q101 to A111 is flexible loop. Residues D166–K168, R231–F232, D240, R246–K247, A263, and K267 each bind ATP. D240 is a binding site for L-methionine. Residue K271 participates in L-methionine binding.

The protein belongs to the AdoMet synthase family. Homotetramer; dimer of dimers. It depends on Mg(2+) as a cofactor. Requires K(+) as cofactor.

The protein resides in the cytoplasm. The enzyme catalyses L-methionine + ATP + H2O = S-adenosyl-L-methionine + phosphate + diphosphate. It functions in the pathway amino-acid biosynthesis; S-adenosyl-L-methionine biosynthesis; S-adenosyl-L-methionine from L-methionine: step 1/1. Catalyzes the formation of S-adenosylmethionine (AdoMet) from methionine and ATP. The overall synthetic reaction is composed of two sequential steps, AdoMet formation and the subsequent tripolyphosphate hydrolysis which occurs prior to release of AdoMet from the enzyme. This Rhodospirillum centenum (strain ATCC 51521 / SW) protein is S-adenosylmethionine synthase.